We begin with the raw amino-acid sequence, 97 residues long: UPF0213 protein BLi00048/BL00536 (97 aa).

Positions Asn4–Arg79 constitute a GIY-YIG domain.

Belongs to the UPF0213 family.

This is UPF0213 protein BLi00048/BL00536 from Bacillus licheniformis (strain ATCC 14580 / DSM 13 / JCM 2505 / CCUG 7422 / NBRC 12200 / NCIMB 9375 / NCTC 10341 / NRRL NRS-1264 / Gibson 46).